Consider the following 201-residue polypeptide: Small ribosomal subunit protein uS4 (201 aa).

Residues Leu19–Ile41 form a disordered region. One can recognise an S4 RNA-binding domain in the interval Ser91 to Ala157.

It belongs to the universal ribosomal protein uS4 family. As to quaternary structure, part of the 30S ribosomal subunit. Contacts protein S5. The interaction surface between S4 and S5 is involved in control of translational fidelity.

Functionally, one of the primary rRNA binding proteins, it binds directly to 16S rRNA where it nucleates assembly of the body of the 30S subunit. Its function is as follows. With S5 and S12 plays an important role in translational accuracy. The protein is Small ribosomal subunit protein uS4 of Mycobacteroides abscessus (strain ATCC 19977 / DSM 44196 / CCUG 20993 / CIP 104536 / JCM 13569 / NCTC 13031 / TMC 1543 / L948) (Mycobacterium abscessus).